The primary structure comprises 349 residues: Hydroxymethylglutaryl-CoA synthase (349 aa).

The (3S)-3-hydroxy-3-methylglutaryl-CoA site is built by Asp30 and Ala31. Catalysis depends on Glu82, which acts as the Proton donor/acceptor. (3S)-3-hydroxy-3-methylglutaryl-CoA-binding residues include Cys114 and Thr155. Cys114 acts as the Acyl-thioester intermediate in catalysis. Position 203 (Arg203) interacts with CoA. Positions 205 and 238 each coordinate (3S)-3-hydroxy-3-methylglutaryl-CoA. His238 acts as the Proton donor/acceptor in catalysis. Position 243 (Lys243) interacts with CoA. (3S)-3-hydroxy-3-methylglutaryl-CoA-binding residues include Asn270 and Ser300.

Belongs to the thiolase-like superfamily. Archaeal HMG-CoA synthase family. In terms of assembly, interacts with acetoacetyl-CoA thiolase that catalyzes the precedent step in the pathway and with a DUF35 protein. The acetoacetyl-CoA thiolase/HMG-CoA synthase complex channels the intermediate via a fused CoA-binding site, which allows for efficient coupling of the endergonic thiolase reaction with the exergonic HMGCS reaction.

The enzyme catalyses acetoacetyl-CoA + acetyl-CoA + H2O = (3S)-3-hydroxy-3-methylglutaryl-CoA + CoA + H(+). It participates in metabolic intermediate biosynthesis; (R)-mevalonate biosynthesis; (R)-mevalonate from acetyl-CoA: step 2/3. In terms of biological role, catalyzes the condensation of acetyl-CoA with acetoacetyl-CoA to form 3-hydroxy-3-methylglutaryl-CoA (HMG-CoA). Functions in the mevalonate (MVA) pathway leading to isopentenyl diphosphate (IPP), a key precursor for the biosynthesis of isoprenoid compounds that are building blocks of archaeal membrane lipids. In Methanococcus maripaludis (strain C5 / ATCC BAA-1333), this protein is Hydroxymethylglutaryl-CoA synthase.